We begin with the raw amino-acid sequence, 227 residues long: Uracil-DNA glycosylase (227 aa).

Residue aspartate 68 is the Proton acceptor of the active site.

It belongs to the uracil-DNA glycosylase (UDG) superfamily. UNG family.

It is found in the cytoplasm. The catalysed reaction is Hydrolyzes single-stranded DNA or mismatched double-stranded DNA and polynucleotides, releasing free uracil.. In terms of biological role, excises uracil residues from the DNA which can arise as a result of misincorporation of dUMP residues by DNA polymerase or due to deamination of cytosine. This chain is Uracil-DNA glycosylase, found in Mycolicibacterium paratuberculosis (strain ATCC BAA-968 / K-10) (Mycobacterium paratuberculosis).